Reading from the N-terminus, the 347-residue chain is Eukaryotic translation initiation factor 3 subunit I (347 aa).

5 WD repeats span residues 8-49, 51-89, 149-190, 194-233, and 291-330; these read GHER…GTLD, HMGS…CVQT, THEG…KLVE, VHKD…VLKT, and GHFG…FDFK.

This sequence belongs to the eIF-3 subunit I family. Component of the eukaryotic translation initiation factor 3 (eIF-3) complex.

It localises to the cytoplasm. In terms of biological role, component of the eukaryotic translation initiation factor 3 (eIF-3) complex, which is involved in protein synthesis of a specialized repertoire of mRNAs and, together with other initiation factors, stimulates binding of mRNA and methionyl-tRNAi to the 40S ribosome. The eIF-3 complex specifically targets and initiates translation of a subset of mRNAs involved in cell proliferation. This is Eukaryotic translation initiation factor 3 subunit I from Candida glabrata (strain ATCC 2001 / BCRC 20586 / JCM 3761 / NBRC 0622 / NRRL Y-65 / CBS 138) (Yeast).